A 618-amino-acid chain; its full sequence is 1-deoxy-D-xylulose-5-phosphate synthase (618 aa).

Thiamine diphosphate-binding positions include histidine 72 and 113–115 (GHA). Residue aspartate 144 coordinates Mg(2+). Thiamine diphosphate-binding positions include 145–146 (GA), asparagine 173, histidine 284, and glutamate 359. Asparagine 173 lines the Mg(2+) pocket.

This sequence belongs to the transketolase family. DXPS subfamily. In terms of assembly, homodimer. Requires Mg(2+) as cofactor. Thiamine diphosphate serves as cofactor.

The enzyme catalyses D-glyceraldehyde 3-phosphate + pyruvate + H(+) = 1-deoxy-D-xylulose 5-phosphate + CO2. It participates in metabolic intermediate biosynthesis; 1-deoxy-D-xylulose 5-phosphate biosynthesis; 1-deoxy-D-xylulose 5-phosphate from D-glyceraldehyde 3-phosphate and pyruvate: step 1/1. Functionally, catalyzes the acyloin condensation reaction between C atoms 2 and 3 of pyruvate and glyceraldehyde 3-phosphate to yield 1-deoxy-D-xylulose-5-phosphate (DXP). This is 1-deoxy-D-xylulose-5-phosphate synthase from Dictyoglomus turgidum (strain DSM 6724 / Z-1310).